Here is a 257-residue protein sequence, read N- to C-terminus: Transcription factor bHLH55 (257 aa).

The bHLH domain occupies 74–126; that stretch reads NKRAKHKELERQRRQENTSLFKILRYLLPSQYIKGKRSSADHVLEAVNYIKDL.

In terms of assembly, homodimer. Expressed in roots, leaves, stems, and flowers.

The protein resides in the nucleus. The polypeptide is Transcription factor bHLH55 (BHLH55) (Arabidopsis thaliana (Mouse-ear cress)).